A 414-amino-acid chain; its full sequence is 26S proteasome regulatory subunit 6B homolog (414 aa).

Residues 1 to 33 (MAATMVLDPKPSSTPPPTLPNPYTTDSQSTDSE) form a disordered region. The span at 21-30 (NPYTTDSQST) shows a compositional bias: low complexity. Residues 55-81 (EYVKDELKNLKREQLRSQEEVKRIQSV) are a coiled coil. Residue 202-209 (GPPGTGKT) participates in ATP binding.

Belongs to the AAA ATPase family.

Its subcellular location is the cytoplasm. The protein localises to the nucleus. Its function is as follows. The 26S proteasome is involved in the ATP-dependent degradation of ubiquitinated proteins. The regulatory (or ATPase) complex confers ATP dependency and substrate specificity to the 26S complex. The sequence is that of 26S proteasome regulatory subunit 6B homolog from Helianthus annuus (Common sunflower).